The primary structure comprises 427 residues: Adenylosuccinate synthetase (427 aa).

GTP-binding positions include 12–18 and 40–42; these read GDEGKGK and GHT. Catalysis depends on D13, which acts as the Proton acceptor. D13 and G40 together coordinate Mg(2+). Residues 13–16, 38–41, T128, R142, Q223, T238, and R302 each bind IMP; these read DEGK and NAGH. The Proton donor role is filled by H41. 298 to 304 contributes to the substrate binding site; sequence VTTGRDR. GTP is bound by residues R304, 330 to 332, and 412 to 414; these read KLD and GVG.

This sequence belongs to the adenylosuccinate synthetase family. As to quaternary structure, homodimer. The cofactor is Mg(2+).

It is found in the cytoplasm. It carries out the reaction IMP + L-aspartate + GTP = N(6)-(1,2-dicarboxyethyl)-AMP + GDP + phosphate + 2 H(+). Its pathway is purine metabolism; AMP biosynthesis via de novo pathway; AMP from IMP: step 1/2. Its function is as follows. Plays an important role in the de novo pathway of purine nucleotide biosynthesis. Catalyzes the first committed step in the biosynthesis of AMP from IMP. This chain is Adenylosuccinate synthetase, found in Streptomyces griseus subsp. griseus (strain JCM 4626 / CBS 651.72 / NBRC 13350 / KCC S-0626 / ISP 5235).